The chain runs to 415 residues: Plant UBX domain-containing protein 16 (415 aa).

The UBA domain maps to 19-69 (QLDEEIVLFRQDQLISSFLEIAVDQTAETARILLQTTDWNIDQAVNLFLTN). The 81-residue stretch at 333-413 (DRSVVCSLCV…GLANSLISVT (81 aa)) folds into the UBX domain.

The sequence is that of Plant UBX domain-containing protein 16 from Arabidopsis thaliana (Mouse-ear cress).